Reading from the N-terminus, the 940-residue chain is Coatomer subunit beta (940 aa).

4 HEAT repeats span residues 11 to 48 (FLEAPSVDALKTSLESKNDYVKISAMKTILRVVINGDS), 90 to 125 (QEMILACNSFRNDLQHPNEFIRGATLRFLCKLKEPE), 126 to 162 (LLDPLIPTVRQCLEHRHAYVRKNAILAVFSIYQVSNH), and 310 to 347 (SILEDLITDVIPFLSSSDFDVCEKAISIIMGLVSSRNV).

In terms of assembly, oligomeric complex that consists of at least the alpha, beta, beta', gamma, delta, epsilon and zeta subunits.

Its subcellular location is the cytoplasm. The protein resides in the golgi apparatus membrane. It localises to the cytoplasmic vesicle. The protein localises to the COPI-coated vesicle membrane. Functionally, the coatomer is a cytosolic protein complex that binds to dilysine motifs and reversibly associates with Golgi non-clathrin-coated vesicles, which further mediate biosynthetic protein transport from the ER, via the Golgi up to the trans Golgi network. Coatomer complex is required for budding from Golgi membranes, and is essential for the retrograde Golgi-to-ER transport of dilysine-tagged proteins. The protein is Coatomer subunit beta (sec26) of Schizosaccharomyces pombe (strain 972 / ATCC 24843) (Fission yeast).